A 278-amino-acid polypeptide reads, in one-letter code: tRNA (guanine-N(7)-)-methyltransferase (278 aa).

A disordered region spans residues 1–42 (MRHDGPMHVQPGVGLQSDTSSSTGTGSGPADEPEAEKSAWGY). S-adenosyl-L-methionine-binding residues include Glu-106, Glu-131, Asn-160, and Asp-183. Asp-183 is an active-site residue. Residues Lys-187, Asp-219, and 256 to 259 (TKYE) contribute to the substrate site.

Belongs to the class I-like SAM-binding methyltransferase superfamily. TrmB family.

The enzyme catalyses guanosine(46) in tRNA + S-adenosyl-L-methionine = N(7)-methylguanosine(46) in tRNA + S-adenosyl-L-homocysteine. It functions in the pathway tRNA modification; N(7)-methylguanine-tRNA biosynthesis. Its function is as follows. Catalyzes the formation of N(7)-methylguanine at position 46 (m7G46) in tRNA. In Mycobacterium ulcerans (strain Agy99), this protein is tRNA (guanine-N(7)-)-methyltransferase.